A 1167-amino-acid polypeptide reads, in one-letter code: MHTGEYSELLIGINGHMKKITLKLKNNLEEDQYSNCVKYGWIEKRCGKNQSFSSWKRMWFILKDSKLTYYIKEKNLKKRSSTIGSTQEFFKQQHGIDNNNCTNSNSNNNNNNSDLIHLSAPSLSSSTSSTISPISSSSSLTTTTTTTTTTTNANTNNGLSDSINHVYLEGELGKKKEGKGWKVRWMKLLEHSLVYYKSSKDKEPLGIVNLNECQDCEVNKESSNKFVVVHSSNRYYFKTNTKQELTQWVKSVKSRIPSINQTKMDLDQFQLKGVIEFNSIQQIAETFKFNSQPNCLTITTDEKAYYLSFDSNKDKLDWLNQLNLTINKFKGGFNSGGGSNNSSPSSLQSQQAKESGNGGSLSPNILGNFKSSIKPWRFSSSPSQGRVSIGGGGDRSSTQVKFVDNPLSKSSNKEEFDGGEYGSQILPRKSTIIGPNGGVKVSTSGAVELSPVLISSNNNNNNTISSSGNSIPTCLSDLINESSDNEDGDDLKMMIPESLKNEMMRRSAISSLKNFKLEIFIWSNHQEVFTFLFSDSVLVDQVKAFAFKKIPSLANLSVLDYRLGIDEDTLLEVEFLKFIYSHTMVELALKTCGIVKIGIFHHRKDRRVKEKLYSDKFYGHLLSQSPDGRKGNGVGIGGNGIPIEYSRSEPNLQSCLSSSPSTRETMVPSSPSSHQLITPPPSLKQYEQQLSSSSSSSSQQLQLQLQQQEQEQLLQEQPEAEQSQPEPQPQLEPESEIEIEELEQPIEELLNISTTPISIRSNSILSSSTSASSSPSSTPSLTPVIERQQKMSAAGWHSVNPSVTLNQRRQLISGCPGWNIEVSNPTSTFTSQGFKPKFDKQEHGFYRRYNFDGTSTVQSFLGVDMKMGPLAFSLAKDANDNYRGVLHTKHGAKTISEDSKNIVGILNLLSLSKKVKTKKVVSHLIGLLDPSIDAKLLNLASNQSELQKELLSFEERQTTSGFKFGMVYCRHGQVTDDEIFSNKQGSPEWDEFLSLIGDKIELVGWPHYSAGLDVKFNSTGTHSLYTDYHGNEVMFHVSTMLPFSTTDYQQIERKRQVGNDICVVIFNDGTLSYMPNTITSQFNHVIILVQYDKQNNGYKVSMACKDGVKSPFEPLSPNNLIKKSDIKDFILTKLINGELASLQAPVFASKITRTRESLLNYYISQFL.

2 consecutive PH domains span residues 35–140 (NCVK…SSSL) and 165–257 (HVYL…SRIP). The interval 95–160 (GIDNNNCTNS…TNANTNNGLS (66 aa)) is disordered. Over residues 98 to 155 (NNNCTNSNSNNNNNNSDLIHLSAPSLSSSTSSTISPISSSSSLTTTTTTTTTTTNANT) the composition is skewed to low complexity. Disordered regions lie at residues 335 to 361 (SGGG…GGSL), 376 to 400 (WRFS…STQV), and 645 to 734 (YSRS…LEPE). Positions 340-351 (NNSSPSSLQSQQ) are enriched in low complexity. Residues 648–676 (SEPNLQSCLSSSPSTRETMVPSSPSSHQL) show a composition bias toward polar residues. The segment covering 687 to 732 (EQQLSSSSSSSSQQLQLQLQQQEQEQLLQEQPEAEQSQPEPQPQLE) has biased composition (low complexity). One can recognise a Rap-GAP domain in the interval 950–1162 (LLSFEERQTT…RTRESLLNYY (213 aa)).

This Dictyostelium discoideum (Social amoeba) protein is PH and Rap-GAP domain-containing protein DDB_G0271806.